Reading from the N-terminus, the 691-residue chain is MTESTEQTTPTNGGGLASLKLAQLQALASQLGIAGGSRMRKADLVTAISDHQRGGSVADRDAAERAAQAPAAPAAETAPAAASSEDAAPAAERPARRRSRRADADTSAPAAAQDGQPQAEAREAQTEQAPRETASDQDRSGGSEARDEGEDRPQSERRSRGRRRAGDDDAQQGQDRRSDGAQGEDGADADRRGDREDRDDNGRENGRGRNGRNGRDRDNGRDRENGRENSRDRENGRDGSREQRGDKSEDGGRGDGGRGDRSRRDDRDDEGGRNRRNRRNRNERGRNRRGRGGPEVDETELTEDDVLQPVAGILDVLDNYAFVRTSGYLPGPNDVYVSLAMVKKYGLRKGDAVVGPIAPRDGEKQQHHGGGSNRQKFNALVKISSVNGQPAVEHPQRVEFGKLVPLYPQERLRLETDPKLIGPRVIDLVSPIGKGQRGLIVSPPKAGKTMILQSIANAIKTNNPEVHLMMVLVDERPEEVTDMQRSVDGEVIASTFDRPADDHTTLAELAIERAKRLVEMGRDVVVLLDSMTRLGRAYNLAAPASGRILSGGVDSSALYPPKKFFGAARNIENGGSLTILATALVETGSRMDEVIFEEFKGTGNMELRLSRHLAERRIFPAVDVNASGTRREEALLSQEEVKIMWKLRRVLSGLEQQQALDLLTNKIKDTASNAEFLMLVSKTTLGSKGDD.

The interval 48 to 303 (ISDHQRGGSV…PEVDETELTE (256 aa)) is disordered. Residues 50 to 64 (DHQRGGSVADRDAAE) are compositionally biased toward basic and acidic residues. Composition is skewed to low complexity over residues 65–92 (RAAQAPAAPAAETAPAAASSEDAAPAAE) and 105–119 (DTSAPAAAQDGQPQA). Composition is skewed to basic and acidic residues over residues 120–158 (EAREAQTEQAPRETASDQDRSGGSEARDEGEDRPQSERR) and 188–273 (DADR…EGGR). The Rho RNA-BD domain occupies 307–390 (LQPVAGILDV…VKISSVNGQP (84 aa)). ATP contacts are provided by residues 433-438 (GKGQRG), 445-450 (KAGKTM), and arginine 476.

This sequence belongs to the Rho family. Homohexamer. The homohexamer assembles into an open ring structure.

Facilitates transcription termination by a mechanism that involves Rho binding to the nascent RNA, activation of Rho's RNA-dependent ATPase activity, and release of the mRNA from the DNA template. In Micrococcus luteus (Micrococcus lysodeikticus), this protein is Transcription termination factor Rho.